We begin with the raw amino-acid sequence, 143 residues long: D-aminoacyl-tRNA deacylase (143 aa).

The Gly-cisPro motif, important for rejection of L-amino acids signature appears at 135–136; the sequence is GP.

The protein belongs to the DTD family. Homodimer.

It is found in the cytoplasm. The enzyme catalyses glycyl-tRNA(Ala) + H2O = tRNA(Ala) + glycine + H(+). It catalyses the reaction a D-aminoacyl-tRNA + H2O = a tRNA + a D-alpha-amino acid + H(+). Functionally, an aminoacyl-tRNA editing enzyme that deacylates mischarged D-aminoacyl-tRNAs. Also deacylates mischarged glycyl-tRNA(Ala), protecting cells against glycine mischarging by AlaRS. Acts via tRNA-based rather than protein-based catalysis; rejects L-amino acids rather than detecting D-amino acids in the active site. By recycling D-aminoacyl-tRNA to D-amino acids and free tRNA molecules, this enzyme counteracts the toxicity associated with the formation of D-aminoacyl-tRNA entities in vivo and helps enforce protein L-homochirality. The protein is D-aminoacyl-tRNA deacylase of Mycolicibacterium paratuberculosis (strain ATCC BAA-968 / K-10) (Mycobacterium paratuberculosis).